The primary structure comprises 247 residues: Myelin-oligodendrocyte glycoprotein (247 aa).

An N-terminal signal peptide occupies residues 1-29 (MASLSRPSLPSCLCSFLLLLLLQVSSSYA). Residues 30-154 (GQFRVIGPRH…EDPFYWVSPG (125 aa)) are Extracellular-facing. Residues 32 to 145 (FRVIGPRHPI…EEAAMELKVE (114 aa)) enclose the Ig-like V-type domain. A disulfide bond links cysteine 53 and cysteine 127. N-linked (GlcNAc...) asparagine glycosylation is present at asparagine 60. Residues 155 to 175 (VLVLLAVLPVLLLQITVGLIF) traverse the membrane as a helical segment. Topologically, residues 176-210 (LCLQYRLRGKLRAEIENLHRTFDPHFLRVPCWKIT) are cytoplasmic. The chain crosses the membrane as a helical span at residues 211–231 (LFVIVPVLGPLVALIICYNWL). Residues 232 to 247 (HRRLAGQFLEELRNPF) are Extracellular-facing.

Belongs to the immunoglobulin superfamily. BTN/MOG family. In terms of assembly, homodimer. May form heterodimers between the different isoforms. (Microbial infection) Interacts with rubella virus E2 glycoprotein. Found exclusively in the CNS, where it is localized on the surface of myelin and oligodendrocyte cytoplasmic membranes.

Its subcellular location is the cell membrane. Mediates homophilic cell-cell adhesion. Minor component of the myelin sheath. May be involved in completion and/or maintenance of the myelin sheath and in cell-cell communication. In terms of biological role, (Microbial infection) Acts as a receptor for rubella virus. The polypeptide is Myelin-oligodendrocyte glycoprotein (MOG) (Homo sapiens (Human)).